Here is a 455-residue protein sequence, read N- to C-terminus: MSVAVVLFTSDLRLHDNPVLRAALRDADEVVPLFVRDDAVHRAGFDAPNPLAFLADCLAALDAGLRHRGGRLIVRRGEAATEVRRVAEETGAARVHIAAGVSRYAARREQRIREALADSGRELHVHDAVVTALAPGRVVPTGGKDHFAVFTPYFRRWEAEGVRGTQTAPRTVRVPDGVASDPLPDRDCVENLSPGLARGGEEAGRKLVTSWLNGPMADYEDGHDDLAGDATSRLSPHLHFGTVSAAELVHRAREKGGLGGEAFVRQLAWRDFHHQVLADRPDASWSDYRPRHDRWRSDADEMHAWKSGLTGYPLVDAAMRQLAHEGWMHNRARMLAASFLTKTLYVDWREGARHFLDLLVDGDVANNQLNWQWVAGTGTDTRPNRVLNPVIQGKRFDARGDYVRGWVPELAEVEGSAIHEPWKLQGLDRAGLDYPDPVVDLAEARARFERARGLD.

The region spanning 2–131 (SVAVVLFTSD…ELHVHDAVVT (130 aa)) is the Photolyase/cryptochrome alpha/beta domain. Residues tyrosine 219 and 231-235 (TSRLS) each bind FAD. 2 interaction with DNA regions span residues 266 to 273 (QLAWRDFH) and 330 to 331 (NR). 361 to 363 (DGD) serves as a coordination point for FAD. Residue glutamine 392 participates in DNA binding.

It belongs to the DNA photolyase class-1 family. In terms of assembly, monomer. The cofactor is FAD. Coenzyme F420-(gamma-Glu)n is required as a cofactor.

The enzyme catalyses cyclobutadipyrimidine (in DNA) = 2 pyrimidine residues (in DNA).. Its function is as follows. Involved in repair of UV radiation-induced DNA damage. Catalyzes the light-dependent monomerization (300-600 nm) of cyclobutyl pyrimidine dimers (in cis-syn configuration), which are formed between adjacent bases on the same DNA strand upon exposure to ultraviolet radiation. This Streptomyces griseus protein is Deoxyribodipyrimidine photo-lyase (phr).